The chain runs to 149 residues: Flagellar assembly factor FliW (149 aa).

This sequence belongs to the FliW family. Interacts with translational regulator CsrA and flagellin(s).

The protein localises to the cytoplasm. In terms of biological role, acts as an anti-CsrA protein, binds CsrA and prevents it from repressing translation of its target genes, one of which is flagellin. Binds to flagellin and participates in the assembly of the flagellum. This is Flagellar assembly factor FliW from Thermotoga neapolitana (strain ATCC 49049 / DSM 4359 / NBRC 107923 / NS-E).